Here is a 514-residue protein sequence, read N- to C-terminus: MTTAKRPLALLILDGWGYRENPHNNAIFHARTPVLDKLNAQFPNSLISGSGLDVGLPDGQMGNSEVGHINIGSGRVVYQELTRVSKAIEEGEFEENTVLCKTIDDAIKANGAVHIMGLLSPGGVHSHEEHIEAMCRMAVKRGAKQVYLHAFLDGRDTPPRSAKGSLAHFGDLFTTLGQGRIASVIGRYYAMDRDNRWDRVSQAYELITQGKGKFSYSNAVDALEAAYSRDENDEFVAASSITDAQGQTASLNDGDSLIFMNFRADRARQITRSVINADFDGFERAVTPKINFVTLTEYAADISAPKAFSSSDLVNTLGETLQNLGKTQLRISETEKYAHVTFFFNGGKEDPFKGEDRIMIPSPKVATYDLQPEMNSTELTDKLVEAIESAKYDVVICNYPNGDMVGHTGNFDAAVKACEAVDACIGRVVAALAKVNGECLITADHGNAEQMTDESTGQAHTAHTSELVPFIYVGRDASIKDGGRLSDIAPTMLSLMGQPVPAEMTGRCIIDLKE.

Positions 14 and 64 each coordinate Mn(2+). S64 serves as the catalytic Phosphoserine intermediate. Substrate contacts are provided by residues H125, 155-156 (RD), R187, R193, 263-266 (RADR), and K336. Positions 403, 407, 444, 445, and 463 each coordinate Mn(2+).

This sequence belongs to the BPG-independent phosphoglycerate mutase family. As to quaternary structure, monomer. Mn(2+) is required as a cofactor.

The catalysed reaction is (2R)-2-phosphoglycerate = (2R)-3-phosphoglycerate. Its pathway is carbohydrate degradation; glycolysis; pyruvate from D-glyceraldehyde 3-phosphate: step 3/5. Functionally, catalyzes the interconversion of 2-phosphoglycerate and 3-phosphoglycerate. In Shewanella denitrificans (strain OS217 / ATCC BAA-1090 / DSM 15013), this protein is 2,3-bisphosphoglycerate-independent phosphoglycerate mutase.